We begin with the raw amino-acid sequence, 320 residues long: tRNA-cytidine(32) 2-sulfurtransferase (320 aa).

The short motif at 54–59 is the PP-loop motif element; sequence SGGKDS. [4Fe-4S] cluster contacts are provided by C129, C132, and C220.

Belongs to the TtcA family. As to quaternary structure, homodimer. Mg(2+) is required as a cofactor. Requires [4Fe-4S] cluster as cofactor.

It localises to the cytoplasm. The catalysed reaction is cytidine(32) in tRNA + S-sulfanyl-L-cysteinyl-[cysteine desulfurase] + AH2 + ATP = 2-thiocytidine(32) in tRNA + L-cysteinyl-[cysteine desulfurase] + A + AMP + diphosphate + H(+). It participates in tRNA modification. Catalyzes the ATP-dependent 2-thiolation of cytidine in position 32 of tRNA, to form 2-thiocytidine (s(2)C32). The sulfur atoms are provided by the cysteine/cysteine desulfurase (IscS) system. In Bordetella bronchiseptica (strain ATCC BAA-588 / NCTC 13252 / RB50) (Alcaligenes bronchisepticus), this protein is tRNA-cytidine(32) 2-sulfurtransferase.